The following is a 216-amino-acid chain: DNA gyrase subunit B (216 aa).

One can recognise a Toprim domain in the interval 140–216; that stretch reads SELYLVEGDS…PDKLRYHKII (77 aa).

The protein belongs to the type II topoisomerase GyrB family. In terms of assembly, heterotetramer, composed of two GyrA and two GyrB chains. In the heterotetramer, GyrA contains the active site tyrosine that forms a transient covalent intermediate with DNA, while GyrB binds cofactors and catalyzes ATP hydrolysis.

Its subcellular location is the cytoplasm. The enzyme catalyses ATP-dependent breakage, passage and rejoining of double-stranded DNA.. A type II topoisomerase that negatively supercoils closed circular double-stranded (ds) DNA in an ATP-dependent manner to modulate DNA topology and maintain chromosomes in an underwound state. Negative supercoiling favors strand separation, and DNA replication, transcription, recombination and repair, all of which involve strand separation. Also able to catalyze the interconversion of other topological isomers of dsDNA rings, including catenanes and knotted rings. Type II topoisomerases break and join 2 DNA strands simultaneously in an ATP-dependent manner. This chain is DNA gyrase subunit B (gyrB), found in Acinetobacter sp. (strain T4).